The chain runs to 449 residues: UDP-N-acetylmuramate--L-alanine ligase (449 aa).

An ATP-binding site is contributed by Gly-113–Thr-119.

Belongs to the MurCDEF family.

It is found in the cytoplasm. It catalyses the reaction UDP-N-acetyl-alpha-D-muramate + L-alanine + ATP = UDP-N-acetyl-alpha-D-muramoyl-L-alanine + ADP + phosphate + H(+). The protein operates within cell wall biogenesis; peptidoglycan biosynthesis. In terms of biological role, cell wall formation. The polypeptide is UDP-N-acetylmuramate--L-alanine ligase (Hydrogenobaculum sp. (strain Y04AAS1)).